Reading from the N-terminus, the 394-residue chain is Xylose isomerase (394 aa).

Active-site residues include His54 and Asp57. Mg(2+) contacts are provided by Glu181, Glu217, His220, Asp245, Asp255, Asp257, and Asp292.

The protein belongs to the xylose isomerase family. As to quaternary structure, homotetramer. Mg(2+) serves as cofactor.

It is found in the cytoplasm. It catalyses the reaction alpha-D-xylose = alpha-D-xylulofuranose. The sequence is that of Xylose isomerase (xylA) from Actinoplanes sp. (strain ATCC 31351 / 3876) (Ampullariella sp.).